Consider the following 277-residue polypeptide: Small ribosomal subunit protein uS5 (277 aa).

The interval 18 to 40 (AAGRPSWSWQRPGERARTPGRKA) is disordered. Positions 29-40 (PGERARTPGRKA) are enriched in basic and acidic residues. The region spanning 87 to 150 (LKDEVLKIMP…ILAKLSIIPV (64 aa)) is the S5 DRBM domain.

The protein belongs to the universal ribosomal protein uS5 family. As to quaternary structure, component of the small ribosomal subunit.

It is found in the cytoplasm. The protein resides in the nucleus. Its subcellular location is the nucleolus. Component of the ribosome, a large ribonucleoprotein complex responsible for the synthesis of proteins in the cell. The small ribosomal subunit (SSU) binds messenger RNAs (mRNAs) and translates the encoded message by selecting cognate aminoacyl-transfer RNA (tRNA) molecules. The large subunit (LSU) contains the ribosomal catalytic site termed the peptidyl transferase center (PTC), which catalyzes the formation of peptide bonds, thereby polymerizing the amino acids delivered by tRNAs into a polypeptide chain. The nascent polypeptides leave the ribosome through a tunnel in the LSU and interact with protein factors that function in enzymatic processing, targeting, and the membrane insertion of nascent chains at the exit of the ribosomal tunnel. Plays a role in the assembly and function of the 40S ribosomal subunit. Mutations in this protein affects the control of translational fidelity. Involved in nucleolar processing of pre-18S ribosomal RNA and ribosome assembly. In Ictalurus punctatus (Channel catfish), this protein is Small ribosomal subunit protein uS5 (rps2).